Reading from the N-terminus, the 312-residue chain is Probable N-glycosylase/DNA lyase (312 aa).

Residues 1–22 (MRIPVGDFDLEMTQRSGQTSQP) are disordered. Positions 13–22 (TQRSGQTSQP) are enriched in polar residues. Lys-235 is an active-site residue.

The protein belongs to the type-1 OGG1 family.

The catalysed reaction is 2'-deoxyribonucleotide-(2'-deoxyribose 5'-phosphate)-2'-deoxyribonucleotide-DNA = a 3'-end 2'-deoxyribonucleotide-(2,3-dehydro-2,3-deoxyribose 5'-phosphate)-DNA + a 5'-end 5'-phospho-2'-deoxyribonucleoside-DNA + H(+). Its function is as follows. DNA repair enzyme that incises DNA at 8-oxoG residues. Excises 7,8-dihydro-8-oxoguanine and 2,6-diamino-4-hydroxy-5-N-methylformamidopyrimidine (FAPY) from damaged DNA. Has a beta-lyase activity that nicks DNA 3' to the lesion. The chain is Probable N-glycosylase/DNA lyase from Methanothermobacter thermautotrophicus (strain ATCC 29096 / DSM 1053 / JCM 10044 / NBRC 100330 / Delta H) (Methanobacterium thermoautotrophicum).